We begin with the raw amino-acid sequence, 150 residues long: Large ribosomal subunit protein bL9 (150 aa).

Belongs to the bacterial ribosomal protein bL9 family.

Functionally, binds to the 23S rRNA. This Ralstonia pickettii (strain 12J) protein is Large ribosomal subunit protein bL9.